Here is a 251-residue protein sequence, read N- to C-terminus: tRNA pseudouridine synthase A (251 aa).

The Nucleophile role is filled by Asp56. Tyr110 serves as a coordination point for substrate.

Belongs to the tRNA pseudouridine synthase TruA family.

The enzyme catalyses uridine(38/39/40) in tRNA = pseudouridine(38/39/40) in tRNA. Its function is as follows. Formation of pseudouridine at positions 38, 39 and 40 in the anticodon stem and loop of transfer RNAs. This is tRNA pseudouridine synthase A from Picrophilus torridus (strain ATCC 700027 / DSM 9790 / JCM 10055 / NBRC 100828 / KAW 2/3).